Consider the following 439-residue polypeptide: Keratin, type I cytoskeletal 40 (439 aa).

The tract at residues 1 to 89 (MASDGSPSCC…CEEGSFNSNE (89 aa)) is head. The IF rod domain occupies 89 to 400 (EKETMQFLND…GLLEKEDSRL (312 aa)). Residues 90-124 (KETMQFLNDRLASYLERVRSLEENNAELECRIREQ) form a coil 1A region. The tract at residues 125 to 135 (CEPNAPLVCPD) is linker 1. Residues 136-236 (YQRYFDTIEE…HEEEVNLLRE (101 aa)) are coil 1B. The interval 237–252 (QLGDRLSVELDTAPTV) is linker 12. A coil 2 region spans residues 253 to 396 (DLNKVLDEMR…NTYRGLLEKE (144 aa)). Residues 397–439 (DSRLPCNPGSGAPMPNSTCEPCSNSMCEPCSAYVICTVENCCA) are tail.

This sequence belongs to the intermediate filament family. Heterotetramer of two type I and two type II keratins.

Functionally, may play a role in late hair differentiation. The polypeptide is Keratin, type I cytoskeletal 40 (Krt40) (Mus musculus (Mouse)).